The sequence spans 122 residues: Large ribosomal subunit protein uL14 (122 aa).

Belongs to the universal ribosomal protein uL14 family. Part of the 50S ribosomal subunit. Forms a cluster with proteins L3 and L19. In the 70S ribosome, L14 and L19 interact and together make contacts with the 16S rRNA in bridges B5 and B8.

Its function is as follows. Binds to 23S rRNA. Forms part of two intersubunit bridges in the 70S ribosome. This is Large ribosomal subunit protein uL14 from Caulobacter vibrioides (strain ATCC 19089 / CIP 103742 / CB 15) (Caulobacter crescentus).